We begin with the raw amino-acid sequence, 217 residues long: 3,4-dihydroxy-2-butanone 4-phosphate synthase (217 aa).

Residues 37–38 (RE), D42, 150–154 (RGGHT), and E174 each bind D-ribulose 5-phosphate. E38 contacts Mg(2+). H153 provides a ligand contact to Mg(2+).

This sequence belongs to the DHBP synthase family. In terms of assembly, homodimer. It depends on Mg(2+) as a cofactor. The cofactor is Mn(2+).

The enzyme catalyses D-ribulose 5-phosphate = (2S)-2-hydroxy-3-oxobutyl phosphate + formate + H(+). Its pathway is cofactor biosynthesis; riboflavin biosynthesis; 2-hydroxy-3-oxobutyl phosphate from D-ribulose 5-phosphate: step 1/1. Functionally, catalyzes the conversion of D-ribulose 5-phosphate to formate and 3,4-dihydroxy-2-butanone 4-phosphate. The protein is 3,4-dihydroxy-2-butanone 4-phosphate synthase of Salmonella arizonae (strain ATCC BAA-731 / CDC346-86 / RSK2980).